A 250-amino-acid chain; its full sequence is Golgi SNAP receptor complex member 1 (250 aa).

Residue A2 is modified to N-acetylalanine. Residues 2–229 (AAGTSNYWED…QRINLRKRRD (228 aa)) are Cytoplasmic-facing. The stretch at 10–30 (EDLRKQARQLENELDLKLVSF) forms a coiled coil. The disordered stretch occupies residues 39–59 (HSSARDGRRDRYSSDTTPLLN). The segment covering 41-51 (SARDGRRDRYS) has biased composition (basic and acidic residues). Residues 70–93 (MAIEIEQLLARLTGINDKMAEYTS) adopt a coiled-coil conformation. A Phosphoserine modification is found at S141. Residues 230-250 (SLILGGVIGVCTILLLLYAFH) traverse the membrane as a helical; Anchor for type IV membrane protein segment.

Belongs to the GOSR1 family. As to quaternary structure, component of several multiprotein Golgi SNARE complexes. Identified in a SNARE complex with BET1, STX5 and YKT6, in a SNARE complex with BET1L, STX5 and YKT6, in a SNARE complex with STX5, GOSR2, SEC22B and BET1, and in complex with STX5 and COG3. Interacts with GABARAPL2.

It is found in the golgi apparatus membrane. Its function is as follows. Involved in transport from the ER to the Golgi apparatus as well as in intra-Golgi transport. It belongs to a super-family of proteins called t-SNAREs or soluble NSF (N-ethylmaleimide-sensitive factor) attachment protein receptor. May play a protective role against hydrogen peroxide induced cytotoxicity under glutathione depleted conditions in neuronal cells by regulating the intracellular ROS levels via inhibition of p38 MAPK (MAPK11, MAPK12, MAPK13 and MAPK14). Participates in docking and fusion stage of ER to cis-Golgi transport. Plays an important physiological role in VLDL-transport vesicle-Golgi fusion and thus in VLDL delivery to the hepatic cis-Golgi. In Bos taurus (Bovine), this protein is Golgi SNAP receptor complex member 1 (GOSR1).